The chain runs to 300 residues: Centromere protein O (300 aa).

Coiled coils occupy residues 18–42 (LAHL…QSVQ) and 83–109 (NQTV…QAYH). S35 carries the phosphoserine modification.

Belongs to the CENP-O/MCM21 family. Component of the CENPA-CAD complex, composed of CENPI, CENPK, CENPL, CENPO, CENPP, CENPQ, CENPR and CENPS. The CENPA-CAD complex interacts with the CENPA-NAC complex, at least composed of CENPA, CENPC, CENPH, CENPM, CENPN, CENPT and CENPU.

The protein localises to the nucleus. It is found in the chromosome. Its subcellular location is the centromere. The protein resides in the kinetochore. Functionally, component of the CENPA-CAD (nucleosome distal) complex, a complex recruited to centromeres which is involved in assembly of kinetochore proteins, mitotic progression and chromosome segregation. May be involved in incorporation of newly synthesized CENPA into centromeres via its interaction with the CENPA-NAC complex. Modulates the kinetochore-bound levels of NDC80 complex. This is Centromere protein O (CENPO) from Homo sapiens (Human).